A 315-amino-acid polypeptide reads, in one-letter code: MNPNFLDFEQPIADLQAKIEELRLVGNDNSLNIGDEISRLQDKSKTLTESIFGNLTSWQIARMARHPRRPYTLDYIENIFTEFDELHGDRHFSDDAAIVGGIARLDGQPVMVIGHQKGREVREKVRRNFGMPRPEGYRKACRLMEMAERFKMPILTFIDTPGAYPGIDAEERNQSEAIAWNLRVMARLKTPIIATVIGEGGSGGALAIGVCDQLNMLQYSTYAVISPEGCASILWKTAEKAPDAAEAMGITADRLKGLGIVDKVIAEPLGGAHRDPVAAAALIREELSSQLAMLKEFDNDELLARRYDRLMSYGL.

In terms of domain architecture, CoA carboxyltransferase C-terminal spans 40–293 (LQDKSKTLTE…REELSSQLAM (254 aa)).

Belongs to the AccA family. As to quaternary structure, acetyl-CoA carboxylase is a heterohexamer composed of biotin carboxyl carrier protein (AccB), biotin carboxylase (AccC) and two subunits each of ACCase subunit alpha (AccA) and ACCase subunit beta (AccD).

Its subcellular location is the cytoplasm. It catalyses the reaction N(6)-carboxybiotinyl-L-lysyl-[protein] + acetyl-CoA = N(6)-biotinyl-L-lysyl-[protein] + malonyl-CoA. It functions in the pathway lipid metabolism; malonyl-CoA biosynthesis; malonyl-CoA from acetyl-CoA: step 1/1. Functionally, component of the acetyl coenzyme A carboxylase (ACC) complex. First, biotin carboxylase catalyzes the carboxylation of biotin on its carrier protein (BCCP) and then the CO(2) group is transferred by the carboxyltransferase to acetyl-CoA to form malonyl-CoA. This is Acetyl-coenzyme A carboxylase carboxyl transferase subunit alpha from Pseudomonas savastanoi pv. phaseolicola (strain 1448A / Race 6) (Pseudomonas syringae pv. phaseolicola (strain 1448A / Race 6)).